We begin with the raw amino-acid sequence, 42 residues long: Large ribosomal subunit protein bL36 (42 aa).

Belongs to the bacterial ribosomal protein bL36 family.

The polypeptide is Large ribosomal subunit protein bL36 (Wolbachia sp. subsp. Brugia malayi (strain TRS)).